Consider the following 651-residue polypeptide: Peptide-N(4)-(N-acetyl-beta-glucosaminyl)asparagine amidase (651 aa).

The residue at position 2 (A2) is an N-acetylalanine. The region spanning 30–91 (EASKLLLTYA…EGETHLIFPK (62 aa)) is the PUB domain. C247, C250, C280, and C283 together coordinate Zn(2+). Catalysis depends on C306, which acts as the Nucleophile. Residues H333 and D350 contribute to the active site. Residues 451 to 651 (ELGGRVSGSL…LEIIITFNDL (201 aa)) form the PAW domain.

It belongs to the transglutaminase-like superfamily. PNGase family. As to quaternary structure, component of a complex required to couple retrotranslocation, ubiquitination and deglycosylation composed of NGLY1, SAKS1, AMFR, VCP and RAD23B. Interacts with the proteasome components RAD23B and PSMC1. Interacts with directly with VCP. Interacts with DERL1, bringing it close to the endoplasmic reticulum membrane. Interacts with SAKS1. It depends on Zn(2+) as a cofactor. As to expression, ubiquitously expressed with highest level in testis.

It localises to the cytoplasm. The enzyme catalyses Hydrolysis of an N(4)-(acetyl-beta-D-glucosaminyl)asparagine residue in which the glucosamine residue may be further glycosylated, to yield a (substituted) N-acetyl-beta-D-glucosaminylamine and a peptide containing an aspartate residue.. With respect to regulation, inhibited by Z-VAD-fmk, a well-known caspase inhibitor, which inhibits enzyme activity through covalent binding of the carbohydrate to the single Cys-306 residue. Specifically deglycosylates the denatured form of N-linked glycoproteins in the cytoplasm and assists their proteasome-mediated degradation. Cleaves the beta-aspartyl-glucosamine (GlcNAc) of the glycan and the amide side chain of Asn, converting Asn to Asp. Prefers proteins containing high-mannose over those bearing complex type oligosaccharides. Can recognize misfolded proteins in the endoplasmic reticulum that are exported to the cytosol to be destroyed and deglycosylate them, while it has no activity toward native proteins. Deglycosylation is a prerequisite for subsequent proteasome-mediated degradation of some, but not all, misfolded glycoproteins. This chain is Peptide-N(4)-(N-acetyl-beta-glucosaminyl)asparagine amidase (Ngly1), found in Mus musculus (Mouse).